The chain runs to 378 residues: Cytochrome b (378 aa).

4 consecutive transmembrane segments (helical) span residues 32 to 52, 76 to 97, 112 to 132, and 177 to 197; these read FGSLLGLCLVIQILTGLFLAM, WLIRYMHANGASMFFICLFLHV, WNIGVILLFAVMATAFMGYVL, and FFAFHFILPFIVAALVMVHLL. Positions 82 and 96 each coordinate heme b. His-181 and His-195 together coordinate heme b. His-200 is an a ubiquinone binding site. 4 consecutive transmembrane segments (helical) span residues 225 to 245, 287 to 307, 319 to 339, and 346 to 366; these read IKDALGIFLLLLLFMTLVLFF, LGGVLALIFSILILMMFPILH, LSQCLFWILVADLFTLTWIGG, and FITIGQVASIIYFVIILFALP.

The protein belongs to the cytochrome b family. As to quaternary structure, the cytochrome bc1 complex contains 11 subunits: 3 respiratory subunits (MT-CYB, CYC1 and UQCRFS1), 2 core proteins (UQCRC1 and UQCRC2) and 6 low-molecular weight proteins (UQCRH/QCR6, UQCRB/QCR7, UQCRQ/QCR8, UQCR10/QCR9, UQCR11/QCR10 and a cleavage product of UQCRFS1). This cytochrome bc1 complex then forms a dimer. Heme b is required as a cofactor.

It localises to the mitochondrion inner membrane. Functionally, component of the ubiquinol-cytochrome c reductase complex (complex III or cytochrome b-c1 complex) that is part of the mitochondrial respiratory chain. The b-c1 complex mediates electron transfer from ubiquinol to cytochrome c. Contributes to the generation of a proton gradient across the mitochondrial membrane that is then used for ATP synthesis. The sequence is that of Cytochrome b (MT-CYB) from Sciurus aberti (Abert's squirrel).